We begin with the raw amino-acid sequence, 98 residues long: DNA-directed RNA polymerase subunit Rpo11 (98 aa).

Belongs to the archaeal Rpo11/eukaryotic RPB11/RPC19 RNA polymerase subunit family. As to quaternary structure, part of the RNA polymerase complex.

The protein localises to the cytoplasm. The catalysed reaction is RNA(n) + a ribonucleoside 5'-triphosphate = RNA(n+1) + diphosphate. Functionally, DNA-dependent RNA polymerase (RNAP) catalyzes the transcription of DNA into RNA using the four ribonucleoside triphosphates as substrates. The protein is DNA-directed RNA polymerase subunit Rpo11 of Korarchaeum cryptofilum (strain OPF8).